Reading from the N-terminus, the 344-residue chain is Cyclin-G2 (344 aa).

The segment at 298-324 is disordered; it reads CFDGSESEDSGEDMSCGEESLSSSPPS. Positions 302–313 are enriched in acidic residues; sequence SESEDSGEDMSC.

The protein belongs to the cyclin family. Cyclin G subfamily. As to expression, highest levels in intestine. Intermediate levels in spleen, brain and kidney. Low levels in testis, stomach, pancreas, liver, salivary gland and muscle. According to PubMed:9139721 also abundant in thymus.

The protein resides in the cytoplasm. Its subcellular location is the nucleus. In terms of biological role, may play a role in growth regulation and in negative regulation of cell cycle progression. This chain is Cyclin-G2 (Ccng2), found in Mus musculus (Mouse).